A 495-amino-acid polypeptide reads, in one-letter code: Cobyric acid synthase (495 aa).

Residues 262 to 445 enclose the GATase cobBQ-type domain; it reads CLEIAVIRLP…LHGLFDNHRW (184 aa). The Nucleophile role is filled by Cys340. Residue His437 is part of the active site.

The protein belongs to the CobB/CobQ family. CobQ subfamily.

Its pathway is cofactor biosynthesis; adenosylcobalamin biosynthesis. Its function is as follows. Catalyzes amidations at positions B, D, E, and G on adenosylcobyrinic A,C-diamide. NH(2) groups are provided by glutamine, and one molecule of ATP is hydrogenolyzed for each amidation. This Synechococcus sp. (strain JA-3-3Ab) (Cyanobacteria bacterium Yellowstone A-Prime) protein is Cobyric acid synthase.